We begin with the raw amino-acid sequence, 38 residues long: Potassium channel toxin alpha-KTx 3.2 (38 aa).

Disulfide bonds link cysteine 8–cysteine 28, cysteine 14–cysteine 33, and cysteine 18–cysteine 35.

The protein belongs to the short scorpion toxin superfamily. Potassium channel inhibitor family. Alpha-KTx 03 subfamily. In terms of tissue distribution, expressed by the venom gland.

Its subcellular location is the secreted. In terms of biological role, potent inhibitor of the Shaker potassium channels and its mammalian homologs (Kv1.1/KCNA1, Kv1.3/KCNA3, Kv1.6/KCNA6) (Ki&lt;1 nM for all channels). Also blocks Kv1.2/KCNA2 (IC(50)=26.8 nM). It also shows a weak interaction with nicotinic acetylcholine receptors (nAChR), suggesting it may weakly inhibit it. The protein is Potassium channel toxin alpha-KTx 3.2 of Leiurus hebraeus (Hebrew deathstalker scorpion).